The sequence spans 388 residues: N-acetylneuraminate epimerase (388 aa).

Positions 1 to 26 are cleaved as a signal peptide; that stretch reads MFSLIRAKRLAIGIAALAWSTGAVMA. 7 Kelch repeats span residues 48–92, 94–147, 149–186, 187–232, 236–285, 307–356, and 358–387; these read MAYV…AAAG, KIFA…VGLA, GRIA…KLVD, SYMG…ATMG, FLLV…VAGA, ANAA…DAPG, and LLVV…LSVE. Residue E242 is the Proton acceptor of the active site.

This sequence belongs to the NanM family. Homodimer.

Its subcellular location is the periplasm. The catalysed reaction is N-acetyl-alpha-neuraminate = N-acetyl-beta-neuraminate. Functionally, converts alpha-N-acetylneuranimic acid (Neu5Ac) to the beta-anomer, accelerating the equilibrium between the alpha- and beta-anomers. Probably facilitates sialidase-negative bacteria to compete successfully for limited amounts of extracellular Neu5Ac, which is likely taken up in the beta-anomer. In addition, the rapid removal of sialic acid from solution might be advantageous to the bacterium to damp down host responses. The protein is N-acetylneuraminate epimerase of Brucella melitensis biotype 1 (strain ATCC 23456 / CCUG 17765 / NCTC 10094 / 16M).